We begin with the raw amino-acid sequence, 384 residues long: S-adenosylmethionine synthase (384 aa).

Residue His-15 participates in ATP binding. Asp-17 lines the Mg(2+) pocket. Position 43 (Glu-43) interacts with K(+). Positions 56 and 99 each coordinate L-methionine. Residues Gln-99–Arg-109 are flexible loop. ATP contacts are provided by residues Asp-164–Lys-166, Arg-230–Phe-231, Asp-239, Arg-245–Lys-246, Ala-262, and Lys-266. Position 239 (Asp-239) interacts with L-methionine. Position 270 (Lys-270) interacts with L-methionine.

Belongs to the AdoMet synthase family. As to quaternary structure, homotetramer; dimer of dimers. The cofactor is Mg(2+). It depends on K(+) as a cofactor.

The protein localises to the cytoplasm. The catalysed reaction is L-methionine + ATP + H2O = S-adenosyl-L-methionine + phosphate + diphosphate. It functions in the pathway amino-acid biosynthesis; S-adenosyl-L-methionine biosynthesis; S-adenosyl-L-methionine from L-methionine: step 1/1. Functionally, catalyzes the formation of S-adenosylmethionine (AdoMet) from methionine and ATP. The overall synthetic reaction is composed of two sequential steps, AdoMet formation and the subsequent tripolyphosphate hydrolysis which occurs prior to release of AdoMet from the enzyme. The polypeptide is S-adenosylmethionine synthase (Histophilus somni (strain 129Pt) (Haemophilus somnus)).